Here is a 212-residue protein sequence, read N- to C-terminus: Thymidylate kinase (212 aa).

11–18 serves as a coordination point for ATP; sequence GIEGSGKT.

The protein belongs to the thymidylate kinase family.

The enzyme catalyses dTMP + ATP = dTDP + ADP. Functionally, phosphorylation of dTMP to form dTDP in both de novo and salvage pathways of dTTP synthesis. In Buchnera aphidicola subsp. Baizongia pistaciae (strain Bp), this protein is Thymidylate kinase.